The sequence spans 184 residues: ATP synthase subunit b, chloroplastic (184 aa).

A helical transmembrane segment spans residues 27-49; it reads LATNPINLSVVLGVLIFFGKGVL.

The protein belongs to the ATPase B chain family. F-type ATPases have 2 components, F(1) - the catalytic core - and F(0) - the membrane proton channel. F(1) has five subunits: alpha(3), beta(3), gamma(1), delta(1), epsilon(1). F(0) has four main subunits: a(1), b(1), b'(1) and c(10-14). The alpha and beta chains form an alternating ring which encloses part of the gamma chain. F(1) is attached to F(0) by a central stalk formed by the gamma and epsilon chains, while a peripheral stalk is formed by the delta, b and b' chains.

The protein localises to the plastid. It localises to the chloroplast thylakoid membrane. In terms of biological role, f(1)F(0) ATP synthase produces ATP from ADP in the presence of a proton or sodium gradient. F-type ATPases consist of two structural domains, F(1) containing the extramembraneous catalytic core and F(0) containing the membrane proton channel, linked together by a central stalk and a peripheral stalk. During catalysis, ATP synthesis in the catalytic domain of F(1) is coupled via a rotary mechanism of the central stalk subunits to proton translocation. Component of the F(0) channel, it forms part of the peripheral stalk, linking F(1) to F(0). The chain is ATP synthase subunit b, chloroplastic from Buxus microphylla (Littleleaf boxwood).